We begin with the raw amino-acid sequence, 1468 residues long: DNA polymerase III PolC-type (1468 aa).

Residues 197–217 (QKSLEDSAPPSEEVTPTQNYD) are disordered. One can recognise an Exonuclease domain in the interval 430–586 (YVVFDVETTG…YDAEATGRLL (157 aa)).

The protein belongs to the DNA polymerase type-C family. PolC subfamily.

The protein localises to the cytoplasm. It catalyses the reaction DNA(n) + a 2'-deoxyribonucleoside 5'-triphosphate = DNA(n+1) + diphosphate. In terms of biological role, required for replicative DNA synthesis. This DNA polymerase also exhibits 3' to 5' exonuclease activity. The sequence is that of DNA polymerase III PolC-type from Streptococcus agalactiae serotype III (strain NEM316).